The following is a 2472-amino-acid chain: Telomere-associated protein RIF1 (2472 aa).

The segment at 1-25 (MTARGQSPLAPLLETLEDPSASHGG) is disordered. Ser-402 bears the Phosphoserine mark. Thr-409 is modified (phosphothreonine). Phosphoserine occurs at positions 782, 979, and 1008. Thr-1047 bears the Phosphothreonine mark. The tract at residues 1145–1192 (LEKSSLSNNECGSLDKTSPEMSNSNNDERKKALISSRKTSTECASSTE) is disordered. The segment covering 1148–1169 (SSLSNNECGSLDKTSPEMSNSN) has biased composition (polar residues). Position 1162 is a phosphoserine (Ser-1162). Position 1220 is a phosphothreonine (Thr-1220). 2 positions are modified to phosphoserine: Ser-1236 and Ser-1238. 2 stretches are compositionally biased toward basic and acidic residues: residues 1265-1279 (AKQR…DSEK) and 1306-1315 (MRSEPEKNTE). Disordered stretches follow at residues 1265–1318 (AKQR…EESV), 1398–1464 (MVNE…DVLP), and 1479–1587 (IEKG…DQEE). The span at 1400 to 1412 (NEDSQVQITPNQK) shows a compositional bias: polar residues. A phosphoserine mark is found at Ser-1422, Ser-1454, and Ser-1513. Basic and acidic residues-rich tracts occupy residues 1431-1464 (SQDK…DVLP) and 1500-1530 (EQNK…EKLV). The residue at position 1518 (Thr-1518) is a Phosphothreonine. Residues Ser-1542, Ser-1552, Ser-1554, Ser-1556, and Ser-1564 each carry the phosphoserine modification. Basic residues predominate over residues 1565-1574 (RKKRSGKWKN). Phosphoserine occurs at positions 1576, 1579, 1613, 1616, 1688, 1693, 1706, and 1709. Positions 1762–1782 (TKKADVQAPVSPSETSQANPY) are disordered. The segment covering 1771–1782 (VSPSETSQANPY) has biased composition (polar residues). Thr-1806 carries the phosphothreonine modification. Position 1810 is a phosphoserine (Ser-1810). Over residues 1846-1859 (AMSLESQESPNENF) the composition is skewed to polar residues. The disordered stretch occupies residues 1846 to 1889 (AMSLESQESPNENFKTVGPCLGDSKNVSQESLETKEEKPEETPK). Residues Ser-1873 and Ser-1876 each carry the phosphoserine modification. Residues 1877–1889 (LETKEEKPEETPK) show a composition bias toward basic and acidic residues. An interaction with condensed chromosomes in telophase region spans residues 1924–2472 (EASFHGQERT…WRSPSHENSI (549 aa)). Residues Ser-1926 and Ser-1971 each carry the phosphoserine modification. Positions 1992-2021 (EQTAAGELDGGNDVSDLHSSEETNTKMKNN) are disordered. Residues 2006 to 2021 (SDLHSSEETNTKMKNN) show a composition bias toward basic and acidic residues. 2 positions are modified to phosphoserine: Ser-2144 and Ser-2161. Thr-2167 is subject to Phosphothreonine. Residues 2170 to 2446 (VWSPLASPST…SGSQLFEMHE (277 aa)) form an interaction with ERCC6 region. 5 positions are modified to phosphoserine: Ser-2172, Ser-2176, Ser-2195, Ser-2196, and Ser-2205. Residues 2227–2255 (RSHSSNSSPIGKSVKTSPTTQSKHNTTSA) show a composition bias toward polar residues. The segment at 2227–2269 (RSHSSNSSPIGKSVKTSPTTQSKHNTTSAKGFLSPGSRSPKFK) is disordered. Phosphoserine occurs at positions 2260, 2339, 2391, 2393, 2465, and 2471.

Belongs to the RIF1 family. In terms of assembly, interacts with TP53BP1 (when phosphorylated by ATM). May interact with TRF2. Interacts with SHLD2. Interacts with ERCC6 (via WHD region). Interacts with ASTE1. Highly expressed in testis.

It is found in the nucleus. The protein localises to the chromosome. The protein resides in the telomere. It localises to the cytoplasm. Its subcellular location is the cytoskeleton. It is found in the spindle. Its function is as follows. Key regulator of TP53BP1 that plays a key role in the repair of double-strand DNA breaks (DSBs) in response to DNA damage: acts by promoting non-homologous end joining (NHEJ)-mediated repair of DSBs. In response to DNA damage, interacts with ATM-phosphorylated TP53BP1. Interaction with TP53BP1 leads to dissociate the interaction between NUDT16L1/TIRR and TP53BP1, thereby unmasking the tandem Tudor-like domain of TP53BP1 and allowing recruitment to DNA DSBs. Once recruited to DSBs, RIF1 and TP53BP1 act by promoting NHEJ-mediated repair of DSBs. In the same time, RIF1 and TP53BP1 specifically counteract the function of BRCA1 by blocking DSBs resection via homologous recombination (HR) during G1 phase. Also required for immunoglobulin class-switch recombination (CSR) during antibody genesis, a process that involves the generation of DNA DSBs. Promotes NHEJ of dysfunctional telomeres. This Homo sapiens (Human) protein is Telomere-associated protein RIF1.